The sequence spans 119 residues: Ribonuclease P protein component (119 aa).

This sequence belongs to the RnpA family. In terms of assembly, consists of a catalytic RNA component (M1 or rnpB) and a protein subunit.

The enzyme catalyses Endonucleolytic cleavage of RNA, removing 5'-extranucleotides from tRNA precursor.. Functionally, RNaseP catalyzes the removal of the 5'-leader sequence from pre-tRNA to produce the mature 5'-terminus. It can also cleave other RNA substrates such as 4.5S RNA. The protein component plays an auxiliary but essential role in vivo by binding to the 5'-leader sequence and broadening the substrate specificity of the ribozyme. The chain is Ribonuclease P protein component from Syntrophomonas wolfei subsp. wolfei (strain DSM 2245B / Goettingen).